The chain runs to 155 residues: Small ribosomal subunit protein uS7c (155 aa).

It belongs to the universal ribosomal protein uS7 family. Part of the 30S ribosomal subunit.

It is found in the plastid. It localises to the chloroplast. In terms of biological role, one of the primary rRNA binding proteins, it binds directly to 16S rRNA where it nucleates assembly of the head domain of the 30S subunit. The polypeptide is Small ribosomal subunit protein uS7c (rps7) (Spirogyra maxima (Green alga)).